The following is a 473-amino-acid chain: Dynein axonemal assembly factor 11 (473 aa).

LRR repeat units follow at residues 22 to 43 (SLEE…DKWC), 45 to 66 (DLKI…SKLK), 67 to 88 (KLEY…EGCE), and 89 to 110 (WLTK…KTLT). In terms of domain architecture, LRRCT spans 123 to 161 (NPCADFDGYRQFVVVTLQQLKWLDGKEIERSERIQALQN). A coiled-coil region spans residues 153–205 (SERIQALQNYTSVEQQIREQEKAYCLRRAKEKEEAQRKLEEENESEDKKKSST). 2 stretches are compositionally biased toward basic and acidic residues: residues 188–202 (QRKL…DKKK) and 273–283 (EKQRKAQDKLS). 3 disordered regions span residues 188-244 (QRKL…TKES), 273-292 (EKQR…AKPP), and 387-473 (VGEM…PPLI). The region spanning 305–402 (VNEAKLDFSL…GGQRTPTSVK (98 aa)) is the CS domain. Over residues 397 to 408 (TPTSVKTTSTSS) the composition is skewed to low complexity. Residues 417–431 (KQIERLEVDPSKHSC) are compositionally biased toward basic and acidic residues. Acidic residues predominate over residues 456 to 467 (PSEEDPDFEDNP).

Belongs to the tilB family. In terms of assembly, interacts (via CS domain) with ZMYND10 (via C-terminus). As to expression, mainly expressed in cells with motile cilia. Expressed in epithelial cells of the trachea, testis and ependymal cells of the cerebral ventricles. In testis, abundant expression in late prophase of meiosis I with a dramatic decrease after the first meiotic division (at protein level).

The protein resides in the cytoplasm. The protein localises to the cell projection. It localises to the cilium. It is found in the dynein axonemal particle. Its subcellular location is the flagellum. In terms of biological role, involved in dynein arm assembly, is important for expression and transporting outer dynein arm (ODA) proteins from the cytoplasm to the cilia. Acts as a crucial component in the formation and motility of spermatozoal flagella. This chain is Dynein axonemal assembly factor 11 (Dnaaf11), found in Mus musculus (Mouse).